A 353-amino-acid polypeptide reads, in one-letter code: Photosystem II protein D1 (353 aa).

At threonine 2 the chain carries N-acetylthreonine. Residue threonine 2 is modified to Phosphothreonine. 3 consecutive transmembrane segments (helical) span residues 29 to 46, 118 to 133, and 142 to 156; these read YIGW…TATS, HFLL…EWEL, and WIAV…AATA. Histidine 118 contributes to the chlorophyll a binding site. Tyrosine 126 contacts pheophytin a. [CaMn4O5] cluster contacts are provided by aspartate 170 and glutamate 189. A helical membrane pass occupies residues 197–218; that stretch reads FHMLGVAGVFGGSLFSAMHGSL. Histidine 198 contacts chlorophyll a. Residues histidine 215 and 264-265 each bind a quinone; that span reads SF. Histidine 215 contributes to the Fe cation binding site. Residue histidine 272 participates in Fe cation binding. The helical transmembrane segment at 274 to 288 threads the bilayer; it reads FLAAWPVVGIWFTAL. [CaMn4O5] cluster-binding residues include histidine 332, glutamate 333, aspartate 342, and alanine 344. Positions 345 to 353 are excised as a propeptide; that stretch reads SVEAPSVNA.

The protein belongs to the reaction center PufL/M/PsbA/D family. In terms of assembly, PSII is composed of 1 copy each of membrane proteins PsbA, PsbB, PsbC, PsbD, PsbE, PsbF, PsbH, PsbI, PsbJ, PsbK, PsbL, PsbM, PsbT, PsbX, PsbY, PsbZ, Psb30/Ycf12, at least 3 peripheral proteins of the oxygen-evolving complex and a large number of cofactors. It forms dimeric complexes. The D1/D2 heterodimer binds P680, chlorophylls that are the primary electron donor of PSII, and subsequent electron acceptors. It shares a non-heme iron and each subunit binds pheophytin, quinone, additional chlorophylls, carotenoids and lipids. D1 provides most of the ligands for the Mn4-Ca-O5 cluster of the oxygen-evolving complex (OEC). There is also a Cl(-1) ion associated with D1 and D2, which is required for oxygen evolution. The PSII complex binds additional chlorophylls, carotenoids and specific lipids. is required as a cofactor. In terms of processing, tyr-161 forms a radical intermediate that is referred to as redox-active TyrZ, YZ or Y-Z. C-terminally processed by CTPA; processing is essential to allow assembly of the oxygen-evolving complex and thus photosynthetic growth.

It is found in the plastid. The protein resides in the chloroplast thylakoid membrane. It carries out the reaction 2 a plastoquinone + 4 hnu + 2 H2O = 2 a plastoquinol + O2. Its function is as follows. Photosystem II (PSII) is a light-driven water:plastoquinone oxidoreductase that uses light energy to abstract electrons from H(2)O, generating O(2) and a proton gradient subsequently used for ATP formation. It consists of a core antenna complex that captures photons, and an electron transfer chain that converts photonic excitation into a charge separation. The D1/D2 (PsbA/PsbD) reaction center heterodimer binds P680, the primary electron donor of PSII as well as several subsequent electron acceptors. The chain is Photosystem II protein D1 from Oltmannsiellopsis viridis (Marine flagellate).